We begin with the raw amino-acid sequence, 410 residues long: Serine hydroxymethyltransferase (410 aa).

Residues Leu-119 and 123–125 (GHL) contribute to the (6S)-5,6,7,8-tetrahydrofolate site. An N6-(pyridoxal phosphate)lysine modification is found at Lys-228. Residue 351 to 353 (SPF) coordinates (6S)-5,6,7,8-tetrahydrofolate.

Belongs to the SHMT family. As to quaternary structure, homodimer. The cofactor is pyridoxal 5'-phosphate.

The protein localises to the cytoplasm. It catalyses the reaction (6R)-5,10-methylene-5,6,7,8-tetrahydrofolate + glycine + H2O = (6S)-5,6,7,8-tetrahydrofolate + L-serine. It functions in the pathway one-carbon metabolism; tetrahydrofolate interconversion. The protein operates within amino-acid biosynthesis; glycine biosynthesis; glycine from L-serine: step 1/1. Its function is as follows. Catalyzes the reversible interconversion of serine and glycine with tetrahydrofolate (THF) serving as the one-carbon carrier. This reaction serves as the major source of one-carbon groups required for the biosynthesis of purines, thymidylate, methionine, and other important biomolecules. Also exhibits THF-independent aldolase activity toward beta-hydroxyamino acids, producing glycine and aldehydes, via a retro-aldol mechanism. The sequence is that of Serine hydroxymethyltransferase from Clostridium perfringens (strain 13 / Type A).